Here is a 218-residue protein sequence, read N- to C-terminus: Adenylate kinase (218 aa).

10-15 (GAGKGT) serves as a coordination point for ATP. The tract at residues 30–59 (STGDMLRAAVKAGTPLGQQAKAVMESGGLV) is NMP. AMP contacts are provided by residues T31, R36, 57 to 59 (GLV), 85 to 88 (GFPR), and Q92. An LID region spans residues 122 to 159 (GRRSHPASGRTYHVKFNPPKVEGKDDITGEDLIQRKDD). Residues R123 and 132–133 (TY) each bind ATP. Residues R156 and R167 each contribute to the AMP site. G203 provides a ligand contact to ATP.

This sequence belongs to the adenylate kinase family. As to quaternary structure, monomer.

The protein localises to the cytoplasm. The enzyme catalyses AMP + ATP = 2 ADP. It participates in purine metabolism; AMP biosynthesis via salvage pathway; AMP from ADP: step 1/1. In terms of biological role, catalyzes the reversible transfer of the terminal phosphate group between ATP and AMP. Plays an important role in cellular energy homeostasis and in adenine nucleotide metabolism. The polypeptide is Adenylate kinase (Variovorax paradoxus (strain S110)).